The sequence spans 480 residues: V-type ATP synthase beta chain 2 (480 aa).

Belongs to the ATPase alpha/beta chains family.

Produces ATP from ADP in the presence of a proton gradient across the membrane. The V-type beta chain is a regulatory subunit. This chain is V-type ATP synthase beta chain 2 (atpB2), found in Treponema pallidum (strain Nichols).